A 540-amino-acid chain; its full sequence is Solute carrier family 22 member 7 (540 aa).

Helical transmembrane passes span 21-41 (LVLL…PIFM), 144-164 (VTST…GYLS), 172-192 (LLLV…ASVN), 202-222 (LTGS…LEWL), 232-252 (VIST…GYLI), 257-277 (WLLL…WWVP), 344-364 (VSLC…GLTL), 378-398 (LLFG…VRLV), 402-422 (LTEA…LLVS), 429-449 (ITAL…TAYL), 462-484 (TGMG…VVLL), and 488-510 (WLLL…VLLL).

This sequence belongs to the major facilitator (TC 2.A.1) superfamily. Organic cation transporter (TC 2.A.1.19) family. In terms of tissue distribution, abundant expression in male and female kidney. In kidney, expressed at the brush border of the proximal tubule S3 segment (S3) in the outer stripe and medullary rays. In kidney, expression is higher in female than male. Also expressed in female liver.

The protein localises to the basolateral cell membrane. It is found in the apical cell membrane. Its subcellular location is the cell membrane. It carries out the reaction orotate(out) + L-glutamate(in) = orotate(in) + L-glutamate(out). The catalysed reaction is 3',5'-cyclic GMP(in) = 3',5'-cyclic GMP(out). The enzyme catalyses GMP(in) = GMP(out). It catalyses the reaction 2'-deoxyguanosine(in) = 2'-deoxyguanosine(out). It carries out the reaction GDP(in) = GDP(out). The catalysed reaction is guanosine(in) = guanosine(out). The enzyme catalyses GTP(in) = GTP(out). It catalyses the reaction 3',5'-cyclic AMP(in) = 3',5'-cyclic AMP(out). It carries out the reaction creatinine(in) = creatinine(out). The catalysed reaction is prostaglandin E2(out) = prostaglandin E2(in). The enzyme catalyses 2-oxoglutarate(in) = 2-oxoglutarate(out). It catalyses the reaction glutarate(in) = glutarate(out). It carries out the reaction urate(out) = urate(in). The catalysed reaction is estrone 3-sulfate(out) = estrone 3-sulfate(in). Its function is as follows. Functions as a Na(+)-independent bidirectional multispecific transporter. Contributes to the renal and hepatic elimination of endogenous organic compounds from the systemic circulation into the urine and bile, respectively. Capable of transporting a wide range of purine and pyrimidine nucleobases, nucleosides, and nucleotides with cGMP, 2'deoxyguanosine and GMP being the preferred substrates. Functions as a pH- and chloride-independent cGMP bidirectional facilitative transporter that can regulate both intracellular and extracellular levels of cGMP and may be involved in cGMP signaling pathways. Mediates orotate/glutamate bidirectional exchange and most likely display a physiological role in hepatic release of glutamate into the blood. Involved in renal secretion and possible reabsorption of creatinine. Able to uptake prostaglandin E2 (PGE2) and may contribute to PGE2 renal excretion. Also transports alpha-ketoglutarate and urate. Unlike human hortolog, able to transport glutarate. Apart from the orotate/glutamate exchange, the counterions for the uptake of other SLC22A7/OAT2 substrates remain to be identified. This Mus musculus (Mouse) protein is Solute carrier family 22 member 7.